A 1594-amino-acid polypeptide reads, in one-letter code: Protein SHORTAGE IN CHIASMATA 1 (1594 aa).

Disordered regions lie at residues Asp-1148–Lys-1180, Ala-1239–Phe-1283, Ala-1396–Asn-1426, Arg-1491–Arg-1523, and Gly-1536–Lys-1594. The span at Ser-1151–Asp-1165 shows a compositional bias: low complexity. 2 stretches are compositionally biased toward basic and acidic residues: residues Pro-1254 to Ser-1265 and Ser-1402 to Tyr-1414. A compositionally biased stretch (polar residues) spans Gln-1577 to Lys-1594.

It belongs to the XPF family. Interacts with PTD. In terms of tissue distribution, highest levels in young buds, where male meiosis occurs. Also present at low levels in plantlets, leaves, flowers, and roots.

The protein resides in the nucleus. Its function is as follows. Essential for the formation of class I meiotic crossovers. This is Protein SHORTAGE IN CHIASMATA 1 from Arabidopsis thaliana (Mouse-ear cress).